The primary structure comprises 209 residues: Heat shock protein beta-1 (209 aa).

Omega-N-methylarginine is present on Arg12. Ser13 bears the Phosphoserine mark. Ser15 is subject to Phosphoserine; by MAPKAPK2 and MAPKAPK3. Phosphoserine is present on Ser27. Residues 74–209 (APAYSRALSR…AGKSEQSGAK (136 aa)) are interaction with TGFB1I1. Residues 80–188 (ALSRQLSSGV…QSAEITIPVT (109 aa)) form the sHSP domain. A phosphoserine; by MAPKAPK2, MAPKAPK3 and MAPKAPK5 mark is found at Ser82 and Ser86. Phosphoserine is present on residues Ser87, Ser90, and Ser102. N6-acetyllysine is present on Lys127. At Thr178 the chain carries Phosphothreonine. A phosphoserine mark is found at Ser180 and Ser203.

The protein belongs to the small heat shock protein (HSP20) family. Homooligomer. Homodimer; becomes monomeric upon activation. Heterooligomer; with HSPB6. Associates with alpha- and beta-tubulin. Interacts with TGFB1I1. Interacts with CRYAB. Interacts with HSPB8. Interacts with HSPBAP1. Phosphorylated upon exposure to protein kinase C activators and heat shock. Phosphorylation by MAPKAPK2 and MAPKAPK3 in response to stress dissociates HSPB1 from large small heat-shock protein (sHsps) oligomers and impairs its chaperone activity and ability to protect against oxidative stress effectively. Phosphorylation by MAPKAPK5 in response to PKA stimulation induces F-actin rearrangement.

It localises to the cytoplasm. The protein localises to the nucleus. Its subcellular location is the cytoskeleton. It is found in the spindle. Small heat shock protein which functions as a molecular chaperone probably maintaining denatured proteins in a folding-competent state. Plays a role in stress resistance and actin organization. Through its molecular chaperone activity may regulate numerous biological processes including the phosphorylation and the axonal transport of neurofilament proteins. The polypeptide is Heat shock protein beta-1 (HSPB1) (Canis lupus familiaris (Dog)).